Reading from the N-terminus, the 217-residue chain is MNQTLLSEFGNPTERVERALDALRHGRGVLVLDDEDRENEGDMIFSAESMTVEQMALTIRHGSGIVCLCLTEERRQQLELPMMVEKNSSHYQTAFTVTIEAAEGVTTGVSAADRLTTIRAAIADNARPSDLNRPGHVFPLRAQPGGVLTRGGHTEATVDLMTLAGLKPSGVLCELTNDDGSMAHAPEVIAFAKQHDMLVLTIEDLVAYRIAAERKAS.

D-ribulose 5-phosphate contacts are provided by residues 37–38 (RE), aspartate 42, 150–154 (RGGHT), and glutamate 174. Residue glutamate 38 coordinates Mg(2+). Histidine 153 is a Mg(2+) binding site.

It belongs to the DHBP synthase family. Homodimer. The cofactor is Mg(2+). Requires Mn(2+) as cofactor.

It carries out the reaction D-ribulose 5-phosphate = (2S)-2-hydroxy-3-oxobutyl phosphate + formate + H(+). The protein operates within cofactor biosynthesis; riboflavin biosynthesis; 2-hydroxy-3-oxobutyl phosphate from D-ribulose 5-phosphate: step 1/1. Its function is as follows. Catalyzes the conversion of D-ribulose 5-phosphate to formate and 3,4-dihydroxy-2-butanone 4-phosphate. The chain is 3,4-dihydroxy-2-butanone 4-phosphate synthase from Pectobacterium atrosepticum (strain SCRI 1043 / ATCC BAA-672) (Erwinia carotovora subsp. atroseptica).